We begin with the raw amino-acid sequence, 237 residues long: Uridylate kinase (237 aa).

ATP is bound at residue 11–14 (KLSG). Positions 18–23 (GGGGIG) are involved in allosteric activation by GTP. Gly52 provides a ligand contact to UMP. ATP is bound by residues Gly53 and Arg57. UMP-binding positions include Asp72 and 133–140 (SGMPYFST). ATP contacts are provided by Gln161, Tyr167, and Asp170.

Belongs to the UMP kinase family. In terms of assembly, homohexamer.

Its subcellular location is the cytoplasm. The enzyme catalyses UMP + ATP = UDP + ADP. Its pathway is pyrimidine metabolism; CTP biosynthesis via de novo pathway; UDP from UMP (UMPK route): step 1/1. With respect to regulation, allosterically activated by GTP. Inhibited by UTP. Catalyzes the reversible phosphorylation of UMP to UDP. The protein is Uridylate kinase of Cutibacterium acnes (strain DSM 16379 / KPA171202) (Propionibacterium acnes).